A 215-amino-acid chain; its full sequence is Urease accessory protein UreG 2 (215 aa).

11–18 (GPVGSGKT) lines the GTP pocket.

Belongs to the SIMIBI class G3E GTPase family. UreG subfamily. As to quaternary structure, homodimer. UreD, UreF and UreG form a complex that acts as a GTP-hydrolysis-dependent molecular chaperone, activating the urease apoprotein by helping to assemble the nickel containing metallocenter of UreC. The UreE protein probably delivers the nickel.

The protein resides in the cytoplasm. Functionally, facilitates the functional incorporation of the urease nickel metallocenter. This process requires GTP hydrolysis, probably effectuated by UreG. This is Urease accessory protein UreG 2 from Methylorubrum populi (strain ATCC BAA-705 / NCIMB 13946 / BJ001) (Methylobacterium populi).